The primary structure comprises 599 residues: MKLAPEFYEVLRNRINISDVVRQKVVLTRKSGNYVGLCPFHQEKTPSFTVSDSKRFFYCFGCKAAGDVIKFTSNISGLSYNDSAIKLATDYGVEIPKLTQKQKEFYEESDEILNILELANKFFKSQLTPEILNYLNERNITNETIKEFSIGFAPRGNKFEKFFHDKNITNVQLGKAGLIGKREDGEIYSLFSNRITIPIRNIYNKIVGFGGRVIGQGLPKYLNSPETVVFQKSETLYGEHKAISSSYKKNYSILVEGYFDVISLHQAGFSEVVASLGTSVTENHLHKLWRAGDEIILCLDGDSAGIKASVRTINLALPLINSEKKISFIRLPTGLDPDDAVNKNGVDFFTKLIDTRISLSEMIWQIEYAGKNFKTAEDKANLEKNLKDYCSKISDSNLRASYYRFFKDQIWQNLVTKQQKTVAKNVNLLPLSSGYSELEILEHAFCALLIKFPQILQEFEIKEFILNLNFSNKLLEEFRNWYLSEVIDNAVEAGEIAAIVEKTSFFDIFLLLSEADNLFLDIAFNKDNVRLDLLWQWLYKRYYLLNLQQEYAHITKEYVITNIDDYEKVLFYKKEILKIASELQDLNESFINHIIDNSK.

A CHC2-type zinc finger spans residues 38 to 62 (CPFHQEKTPSFTVSDSKRFFYCFGC). A Toprim domain is found at 250–332 (NYSILVEGYF…EKKISFIRLP (83 aa)). Glutamate 256, aspartate 300, and aspartate 302 together coordinate Mg(2+).

It belongs to the DnaG primase family. As to quaternary structure, monomer. Interacts with DnaB. Zn(2+) serves as cofactor. Requires Mg(2+) as cofactor.

It catalyses the reaction ssDNA + n NTP = ssDNA/pppN(pN)n-1 hybrid + (n-1) diphosphate.. Its function is as follows. RNA polymerase that catalyzes the synthesis of short RNA molecules used as primers for DNA polymerase during DNA replication. This Rickettsia bellii (strain RML369-C) protein is DNA primase.